The following is a 173-amino-acid chain: DRBM domain-containing protein 340R (173 aa).

In terms of domain architecture, DRBM spans 30-102; it reads NSIGFLNEFC…AFKTIKELNL (73 aa).

The polypeptide is DRBM domain-containing protein 340R (Invertebrate iridescent virus 6 (IIV-6)).